A 292-amino-acid chain; its full sequence is Probable endonuclease LCL3 (292 aa).

The helical transmembrane segment at 41–58 (YFSVAAFAAGSLSLAASY) threads the bilayer. Residues 83–247 (RWIKGRVTSV…KDARRGIWAK (165 aa)) form the TNase-like domain. Residue Arg132 is part of the active site. Ca(2+) is bound at residue Asp137. Active-site residues include Glu140 and Arg180. The segment at 256–282 (EYKRRYAQAADGGEPPSKARAEKEQKR) is disordered. Residues 272 to 282 (SKARAEKEQKR) show a composition bias toward basic and acidic residues.

The protein belongs to the LCL3 family.

It is found in the mitochondrion. It localises to the membrane. This chain is Probable endonuclease LCL3 (LCL3), found in Schizophyllum commune (strain H4-8 / FGSC 9210) (Split gill fungus).